The primary structure comprises 355 residues: Double-stranded RNA-binding protein 4 (355 aa).

2 DRBM domains span residues 4-73 (VYKG…SLTP) and 82-150 (AYKN…SIKN). A compositionally biased stretch (polar residues) spans 149–188 (KNGNSNQTGSPTLPSERQEDVNSNVKSSPQEIHSQPSSKV). Positions 149–193 (KNGNSNQTGSPTLPSERQEDVNSNVKSSPQEIHSQPSSKVVMTPD) are disordered.

As to quaternary structure, heterodimer with DRB1 or DRB5. Interacts with DCL4 and cauliflower mosaic virus (CaMV) transactivator/viroplasmin protein. Interaction with CaMV transactivator/viroplasmin protein inhibits RNA silencing ability of DRB4. As to expression, expressed in roots, leaf vasculature, shoot apical meristem (SAM) and developing anthers.

It is found in the nucleus. Double-stranded RNA-binding protein involved in RNA-mediated post-transcriptional gene silencing (PTGS). Functions in the trans-acting small interfering RNAs (ta-siRNAs) biogenesis by binding and assisting DICER-LIKE 4 (DCL4). Required for DCL4 activity. Required for the 21 nucleotide ta-siRNAs production of the TAS3 transcript in leaves but not in flowers. Plays an important role in silencing RNA of both DNA and RNA viruses. Involved with argonaute 7 (AGO7) and RDR6 in turnip crinkle virus (TCV) silencing. May not be directly involved in viral siRNA production. May stabilize the 21 nucleotide viral siRNAs and deliver them to the RISC complex. Targeted by the viral silencing suppressor (VSR) transactivator/viroplasmin (TAV) protein of the cauliflower mosaic virus (CaMV) that inactivates DRB4 function in RNA silencing. Probably not involved in the guide strand selection from RNA duplexes. Involved in leaf morphology through its function in ta-siRNA-mediated silencing. The protein is Double-stranded RNA-binding protein 4 (DBR4) of Arabidopsis thaliana (Mouse-ear cress).